A 489-amino-acid polypeptide reads, in one-letter code: MKEIAVTIDDKNVIASVSESFHGVAFDASLFSPKGLWSFVDITSPKLFKLLEGLSPGYFRVGGTFANWLFFDLDENNKWKDYWAFKDKTPETATITRRWLFRKQNNLKKETFDDLVKLTKGSKMRLLFDLNAEVRTGYEIGKKMTSTWDSSEAEKLFKYCVSKGYGDNIDWELGNEPDHTSAHNLTEKQVGEDFKALHKVLEKYPTLNKGSLVGPDVGWMGVSYVKGLADGAGDHVTAFTLHQYYFDGNTSDVSTYLDATYFKKLQQLFDKVKDVLKNSPHKDKPLWLGETSSGYNSGTKDVSDRYVSGFLTLDKLGLSAANNVKVVIRQTIYNGYYGLLDKNTLEPNPDYWLMHVHNSLVGNTVFKVDVSDPTNKARVYAQCTKTNSKHTQSRYYKGSLTIFALNVGDEDVTLKIDQYSGKKIYSYILTPEGGQLTSQKVLLNGKELKLVSDQLPELNADESKTSFTLSPKTFGFFVVSDANVEACKK.

Glutamate 176 (proton donor) is an active-site residue. Glutamate 290 (nucleophile) is an active-site residue.

Belongs to the glycosyl hydrolase 79 family.

The catalysed reaction is Random hydrolysis of (1-&gt;3)-linkages between beta-D-glucuronate and N-acetyl-D-glucosamine residues in hyaluronate.. Its activity is regulated as follows. Hyaluronidase activity is inhibited by Mn(2+), Cu(2+) and Fe(3+). Hyaluronidase that mediates hydrolysis of (1-&gt;3)-linkages between beta-D-glucuronate and N-acetyl-D-glucosamine residues in hyaluronate. Very specific to hyaluronate: not able to hydrolyze chitin, heparin or chondroitin sulfate. This chain is Hyaluronoglucuronidase, found in Hirudo nipponia (Korean blood-sucking leech).